We begin with the raw amino-acid sequence, 97 residues long: Citrate lyase acyl carrier protein (97 aa).

Residue S14 is modified to O-(phosphoribosyl dephospho-coenzyme A)serine.

The protein belongs to the CitD family. In terms of assembly, oligomer with a subunit composition of (alpha,beta,gamma)6.

It localises to the cytoplasm. In terms of biological role, covalent carrier of the coenzyme of citrate lyase. The polypeptide is Citrate lyase acyl carrier protein (Rhodopseudomonas palustris (strain BisA53)).